Reading from the N-terminus, the 158-residue chain is Cytochrome c2 (158 aa).

Q1 is subject to Pyrrolidone carboxylic acid. C18, C21, H22, and M102 together coordinate heme c. A disordered region spans residues 129 to 158; sequence AEAAPAADAAAPAAADAAAPAEPAAEGAAT.

It belongs to the cytochrome c family. Binds 1 heme c group covalently per subunit.

Its subcellular location is the periplasm. Its function is as follows. Cytochrome c2 is found mainly in purple, non-sulfur, photosynthetic bacteria where it functions as the electron donor to the oxidized bacteriochlorophyll in the photophosphorylation pathway. However, it may also have a role in the respiratory chain and is found in some non-photosynthetic bacteria. The sequence is that of Cytochrome c2 from Fuscovulum blasticum (Rhodobacter blasticus).